The chain runs to 204 residues: Phosphoprotein p30 (204 aa).

The protein belongs to the asfivirus phosphoprotein p30 family. Oligomer. Interacts with host HNRNPK. Phosphorylated on serine residues in the 115 N-terminal amino acids.

The protein resides in the host cytoplasm. The protein localises to the host nucleus. It is found in the virion. Its function is as follows. Modifies the subcellular distribution of heterogeneous nuclear ribonucleoprotein K (HNRNPK) and may contribute to modulate HNRNPK functions related to processing and export of mRNAs during ASFV infection. Necessary for virus internalization. In African swine fever virus (strain Badajoz 1971 Vero-adapted) (Ba71V), this protein is Phosphoprotein p30.